A 345-amino-acid polypeptide reads, in one-letter code: Alkaline phosphatase isozyme conversion protein (345 aa).

The first 24 residues, 1-24 (MFSALRHRTAALALGVCFILPVHA), serve as a signal peptide directing secretion. Residues H117, D143, E176, and D204 each coordinate Zn(2+).

It belongs to the peptidase M28 family. M28C subfamily.

Its function is as follows. This protein, presumably an aminopeptidase, mediates the conversion of E.coli alkaline phosphatase isozyme 1, to isozymes 2 and 3 by removing, one by one, the two N-terminal arginine residues. This is Alkaline phosphatase isozyme conversion protein (iap) from Escherichia coli (strain K12).